Consider the following 488-residue polypeptide: Ammonium transporter Rh type C-like 2 (488 aa).

At 1–21 (MGNCFGSRGICDRPKNTNIRL) the chain is on the cytoplasmic side. The helical transmembrane segment at 22–42 (SLPAVCFVWQVSMIILFGVFV) threads the bilayer. Over 43 to 73 (RYNEEADTNWVYTKKEKNITSDIENDFYFRY) the chain is Extracellular. N-linked (GlcNAc...) asparagine glycosylation is present at N60. The chain crosses the membrane as a helical span at residues 74–94 (PSFQDVHVMIFVGFGFLMTFL). Topologically, residues 95–98 (KRYS) are cytoplasmic. Residues 99–119 (FGAVGFNFLIAAFGLQWALLM) form a helical membrane-spanning segment. Residues 120–139 (QGWFSPLGDDGKIKIGIENL) are Extracellular-facing. Residues 140-160 (INADFCVASCLIAYGAVLGKV) form a helical membrane-spanning segment. At 161 to 162 (SP) the chain is on the cytoplasmic side. A helical membrane pass occupies residues 163–183 (VQLLVMTLFGITLYAVEEFII). Residues 184 to 191 (LRVLNAKD) are Extracellular-facing. A helical membrane pass occupies residues 192 to 214 (AGGSMVIHTFGAYYGLSISRVLY). The Cytoplasmic segment spans residues 215-232 (RPNLNKSKHMNGSVYHSD). A helical membrane pass occupies residues 233–253 (VFAMIGTLFLWMFWPSFNSAI). Residues 254-264 (CNHGDGQHRAA) are Extracellular-facing. A helical transmembrane segment spans residues 265 to 285 (INTYLALASTVLTTVAISSMF). Residues 286–298 (EKTGKLDMVHIQN) lie on the Cytoplasmic side of the membrane. A helical membrane pass occupies residues 299–319 (STLAGGVAVGTAAEFMLMPYG). S320 is a topological domain (extracellular). The helical transmembrane segment at 321 to 341 (LIVGFFCGIISTLGYIYLTPF) threads the bilayer. Residues 342–356 (LEERLKIQDTCGIHN) are Cytoplasmic-facing. A helical membrane pass occupies residues 357–377 (LHAMPGVIGGIVGAISAAAAS). Residues 378–409 (KEVYGDLGLKNIFSIEGSNVTRLPTVQGGYQA) are Extracellular-facing. Residues 410 to 430 (AALCVALCFGIGGGTFVGLVL) form a helical membrane-spanning segment. At 431–488 (KLPIWGDPADEHCFNDEMYWEVPEDEESIIPPVLSYNNHMIPNNKHEEMRETNFAEQS) the chain is on the cytoplasmic side.

Belongs to the ammonium transporter (TC 2.A.49) family. Rh subfamily. In terms of assembly, homotrimer. At larval stages, expressed only in the yolk sac and gill. However, the kidney and the gills are major sites of expression in adults.

It localises to the apical cell membrane. In terms of biological role, functions as an ammonia transporter. May play a role in the elimination of ammonia in the gill. This Danio rerio (Zebrafish) protein is Ammonium transporter Rh type C-like 2 (rhcgl2).